A 754-amino-acid polypeptide reads, in one-letter code: tRNA(Met) cytidine acetyltransferase TmcA (754 aa).

Positions G181–R202 are disordered. The span at P192–R202 shows a compositional bias: basic and acidic residues. ATP contacts are provided by residues Q212, G236 to L245, and R383. Positions V418–S603 constitute an N-acetyltransferase domain. Acetyl-CoA contacts are provided by residues I529–T531, R536–S542, and E568.

Belongs to the RNA cytidine acetyltransferase family. TmcA subfamily.

The protein localises to the cytoplasm. It catalyses the reaction cytidine(34) in elongator tRNA(Met) + acetyl-CoA + ATP + H2O = N(4)-acetylcytidine(34) in elongator tRNA(Met) + ADP + phosphate + CoA + H(+). Functionally, catalyzes the formation of N(4)-acetylcytidine (ac(4)C) at the wobble position of tRNA(Met), by using acetyl-CoA as an acetyl donor and ATP (or GTP). This chain is tRNA(Met) cytidine acetyltransferase TmcA, found in Haloferax volcanii (strain ATCC 29605 / DSM 3757 / JCM 8879 / NBRC 14742 / NCIMB 2012 / VKM B-1768 / DS2) (Halobacterium volcanii).